The following is a 185-amino-acid chain: Peptidyl-tRNA hydrolase (185 aa).

Tyrosine 14 lines the tRNA pocket. Residue histidine 19 is the Proton acceptor of the active site. Positions 65, 67, and 113 each coordinate tRNA.

It belongs to the PTH family. Monomer.

Its subcellular location is the cytoplasm. It catalyses the reaction an N-acyl-L-alpha-aminoacyl-tRNA + H2O = an N-acyl-L-amino acid + a tRNA + H(+). Hydrolyzes ribosome-free peptidyl-tRNAs (with 1 or more amino acids incorporated), which drop off the ribosome during protein synthesis, or as a result of ribosome stalling. In terms of biological role, catalyzes the release of premature peptidyl moieties from peptidyl-tRNA molecules trapped in stalled 50S ribosomal subunits, and thus maintains levels of free tRNAs and 50S ribosomes. The chain is Peptidyl-tRNA hydrolase from Rickettsia typhi (strain ATCC VR-144 / Wilmington).